Here is a 247-residue protein sequence, read N- to C-terminus: UPF0246 protein LSL_1719 (247 aa).

This sequence belongs to the UPF0246 family.

This is UPF0246 protein LSL_1719 from Ligilactobacillus salivarius (strain UCC118) (Lactobacillus salivarius).